Reading from the N-terminus, the 834-residue chain is Dual specificity calcium/calmodulin-dependent 3',5'-cyclic nucleotide phosphodiesterase 1 (834 aa).

A disordered region spans residues H152–A338. Over residues T207–T222 the composition is skewed to low complexity. The span at T236–D252 shows a compositional bias: basic and acidic residues. Over residues S260–A301 the composition is skewed to low complexity. The span at W313–T322 shows a compositional bias: polar residues. The tract at residues E364–R387 is calmodulin-binding. One can recognise a PDEase domain in the interval A392–D786. H469 (proton donor) is an active-site residue. Zn(2+)-binding residues include H473, H509, D510, and D617. D510 contacts Mg(2+). 2 disordered regions span residues I720–T744 and E797–A834. Basic and acidic residues predominate over residues D732–A741. The span at E823–A834 shows a compositional bias: low complexity.

This sequence belongs to the cyclic nucleotide phosphodiesterase family. PDE1 subfamily. It depends on Zn(2+) as a cofactor. Requires Mg(2+) as cofactor. Expressed in the head (at protein level). Expressed in Malpighian tubules. Expressed in neurons in the brain and ventral ganglia with male flies having higher levels of expression in the abdominal ganglia compared to female flies.

The catalysed reaction is a nucleoside 3',5'-cyclic phosphate + H2O = a nucleoside 5'-phosphate + H(+). The enzyme catalyses 3',5'-cyclic GMP + H2O = GMP + H(+). It catalyses the reaction 3',5'-cyclic AMP + H2O = AMP + H(+). With respect to regulation, type I PDE are activated by the binding of calmodulin in the presence of Ca(2+). Inhibited by zaprinast and sildenafil. Cyclic nucleotide phosphodiesterase with a dual specificity for the second messengers cAMP and cGMP, which are key regulators of many important physiological processes. Required for male fertility and male mating behavior. In Drosophila melanogaster (Fruit fly), this protein is Dual specificity calcium/calmodulin-dependent 3',5'-cyclic nucleotide phosphodiesterase 1.